The following is a 343-amino-acid chain: MTQEIDEKIPVYRNWHELIRPEKVEIDQSNHSETYGKFICQPLERGFATTIGNSLRRILLSSIQGAAITTVKIEGALHELTSMKDVKEDVSEIILNLKQVRLKLNCEESQTVRIEKQGPGPVVAGDIIPSAFVEIMNEDHILCNLTSDMTFCAELTVEWGKGYQPAENQEKDDLTVGQIPIDAIFTPVKKIQYVVSSARVGQQTDYDKLTYEIETDGSVRPEDALAYSAKILKEQLDIFINFDETAVEPEKKAVETEEKQENPYLDKPVEDLELSVRSANCLKNADINFIGDLVQRTDQEMLKTKNFGRKSLNEIKTLLQDMDLTLGVKLEGWNAPSDAETEE.

The tract at residues 1–243 (MTQEIDEKIP…EQLDIFINFD (243 aa)) is alpha N-terminal domain (alpha-NTD). An alpha C-terminal domain (alpha-CTD) region spans residues 261–343 (ENPYLDKPVE…NAPSDAETEE (83 aa)).

It belongs to the RNA polymerase alpha chain family. As to quaternary structure, homodimer. The RNAP catalytic core consists of 2 alpha, 1 beta, 1 beta' and 1 omega subunit. When a sigma factor is associated with the core the holoenzyme is formed, which can initiate transcription.

The catalysed reaction is RNA(n) + a ribonucleoside 5'-triphosphate = RNA(n+1) + diphosphate. In terms of biological role, DNA-dependent RNA polymerase catalyzes the transcription of DNA into RNA using the four ribonucleoside triphosphates as substrates. This chain is DNA-directed RNA polymerase subunit alpha, found in Desulfotalea psychrophila (strain LSv54 / DSM 12343).